Here is a 150-residue protein sequence, read N- to C-terminus: Histone H2A.1 (150 aa).

Residue Met1 is modified to N-acetylmethionine. 2 stretches are compositionally biased toward basic residues: residues 1–24 (MDAS…KKSV) and 141–150 (SKAKKSPKKA). Disordered regions lie at residues 1–26 (MDAS…SVTR) and 128–150 (RKEN…PKKA). Short sequence motifs (SPKK motif) lie at residues 139–142 (SPSK) and 146–149 (SPKK).

Belongs to the histone H2A family. The nucleosome is a histone octamer containing two molecules each of H2A, H2B, H3 and H4 assembled in one H3-H4 heterotetramer and two H2A-H2B heterodimers. The octamer wraps approximately 147 bp of DNA. In terms of tissue distribution, high expression in root meristematic tissues, moderate in whole shoot and very low in mature leaves.

It is found in the nucleus. The protein resides in the chromosome. Its function is as follows. Core component of nucleosome. Nucleosomes wrap and compact DNA into chromatin, limiting DNA accessibility to the cellular machineries which require DNA as a template. Histones thereby play a central role in transcription regulation, DNA repair, DNA replication and chromosomal stability. DNA accessibility is regulated via a complex set of post-translational modifications of histones, also called histone code, and nucleosome remodeling. This chain is Histone H2A.1, found in Pisum sativum (Garden pea).